Consider the following 172-residue polypeptide: Stellate orphon protein at 12D (172 aa).

This sequence belongs to the casein kinase 2 subunit beta family. As to quaternary structure, interacts in vitro with the casein kinase 2 alpha subunit (CkII-alpha). The relevance of such interaction is however unclear in vivo. As to expression, probably not expressed in wild-type flies. In males lacking the Y chromosome, it is testis-specific and constitutes the main component of star-shaped crystals.

Its function is as follows. Unknown. In males lacking the Y chromosome, its strong overexpression leads to the appearance of proteinaceous star-shaped crystals in the primary spermatocytes causing meiotic drive, possibly by interfering with normal casein kinase 2 activity. The sequence is that of Stellate orphon protein at 12D (Ste12DOR) from Drosophila melanogaster (Fruit fly).